We begin with the raw amino-acid sequence, 248 residues long: 5'-nucleotidase SurE (248 aa).

The a divalent metal cation site is built by D8, D9, S39, and N92.

It belongs to the SurE nucleotidase family. A divalent metal cation serves as cofactor.

The protein resides in the cytoplasm. The catalysed reaction is a ribonucleoside 5'-phosphate + H2O = a ribonucleoside + phosphate. In terms of biological role, nucleotidase that shows phosphatase activity on nucleoside 5'-monophosphates. This is 5'-nucleotidase SurE from Tolumonas auensis (strain DSM 9187 / NBRC 110442 / TA 4).